Reading from the N-terminus, the 527-residue chain is MLMLLVFGVLLHEVPLSGQDKAHSEADDAPGKALYDYSSLRLPAEHIPFFLHNNRHVASVCREDSHCPYKKHLENLNYCWGYEKSCAPEFRFGSPVCSYVDLGWTDTLESAQDMFWRQADFGYARERLGEIRTICQPERASDSSLVCSRYLQYCRATGLYLDLRNIKRNHDRFKEDFLQGGEIGGYCKLDSHALVSEGQRKSPLQSWFAELQGYTQLNFRPIEDAKCDIVVEKPTYFMKLDAGINMYHHFCDFLNLYLTQHVNNSFSTDVYIVMWDTSTYGYGDLFSDTWKAFTDYDVIHLKTYDSKKVCFKEAVFSLLPRMRYGLFYNTPLISGCQNTGLFRAFSQHVLHRLNITQEGPKDGKVRVTILARSTEYRKILNQDELVNALKTVSTFEVRVVDYKYRELGFLDQLRITHNTDIFIGMHGAGLTHLLFLPDWAAVFELYNCEDERCYLDLARLRGIHYITWRKPSKVFPQDKGHHPTLGEHPKFTNYSFDVEEFMYLVLQAAEHVLQHPQWPFKKKHDEL.

Positions Met-1–Gln-19 are cleaved as a signal peptide. A Required for optimal activity motif is present at residues Asp-295 to Asp-297. N-linked (GlcNAc...) asparagine glycosylation is present at Asn-354. Residues His-524–Leu-527 carry the Prevents secretion from ER motif.

This sequence belongs to the glycosyltransferase 61 family. As to expression, widely expressed. Expressed in brain, heart, kidney, lung, skeletal muscles and thymus. Highest expression is observed in lung and the lowest in skeletal muscles.

The protein resides in the endoplasmic reticulum lumen. The enzyme catalyses L-seryl-[protein] + UDP-N-acetyl-alpha-D-glucosamine = 3-O-(N-acetyl-beta-D-glucosaminyl)-L-seryl-[protein] + UDP + H(+). It carries out the reaction L-threonyl-[protein] + UDP-N-acetyl-alpha-D-glucosamine = 3-O-(N-acetyl-beta-D-glucosaminyl)-L-threonyl-[protein] + UDP + H(+). Its function is as follows. Catalyzes the transfer of a single N-acetylglucosamine from UDP-GlcNAc to a serine or threonine residue in extracellular proteins resulting in their modification with a beta-linked N-acetylglucosamine (O-GlcNAc). Specifically glycosylates the Thr residue located between the fifth and sixth conserved cysteines of folded EGF-like domains. This is EGF domain-specific O-linked N-acetylglucosamine transferase (Eogt) from Mus musculus (Mouse).